We begin with the raw amino-acid sequence, 102 residues long: U7-agatoxin-Ao1a (102 aa).

A signal peptide spans 1-19 (MTQAFFFLLLVSLVASTLS). A propeptide spanning residues 20–39 (KEFNFCPRAIDEVCPVKEKR) is cleaved from the precursor. Position 101 is a tryptophan amide (W101).

The protein belongs to the venom protein 11 family. 02 (wap-2) subfamily. Contains 5 disulfide bonds. As to expression, expressed by the venom gland.

Its subcellular location is the secreted. The polypeptide is U7-agatoxin-Ao1a (Agelena orientalis (Funnel-web spider)).